We begin with the raw amino-acid sequence, 145 residues long: Large ribosomal subunit protein uL15 (145 aa).

The disordered stretch occupies residues 1–50 (MLHTIKPVANARKTTKRLGRGPGSGTGKTSGKGHKGQLARSGKTLRPGFE). Over residues 20-30 (RGPGSGTGKTS) the composition is skewed to gly residues.

This sequence belongs to the universal ribosomal protein uL15 family. In terms of assembly, part of the 50S ribosomal subunit.

In terms of biological role, binds to the 23S rRNA. The chain is Large ribosomal subunit protein uL15 from Phytoplasma australiense.